The chain runs to 177 residues: Arginine metabolism regulation protein I (177 aa).

The segment covering 1-12 (MTSNSDGSSTSP) has biased composition (polar residues). 2 disordered regions span residues 1–82 (MTSN…TRRK) and 157–177 (NASDTPDATDTSPAQEQSPAN). Acidic residues predominate over residues 40-53 (QDQEGDFDEEDDDD). Positions 56-67 (SVSTSTPTPTIT) are enriched in low complexity. In terms of domain architecture, MADS-box spans 80–134 (RRKQPIRYIENKTRRHVTFSKRRHGIMKKAYELSVLTGANILLLILANSGLVYTF). Positions 158-177 (ASDTPDATDTSPAQEQSPAN) are enriched in polar residues.

In terms of assembly, interacts with ARG81 and ARG82.

The protein resides in the nucleus. With ARG81, ARG82 and MCM1, coordinates the expression of arginine anabolic and catabolic genes in response to arginine. This Saccharomyces cerevisiae (strain ATCC 204508 / S288c) (Baker's yeast) protein is Arginine metabolism regulation protein I (ARG80).